The chain runs to 256 residues: Coiled-coil domain-containing protein 90B, mitochondrial (256 aa).

A mitochondrion-targeting transit peptide spans 1-42 (MRSRWIWRFLRPDGGGIRWTSTPHGRLSPALRRGFLTTTTKS). Residues 129 to 167 (LEKSEFANLRAENEKMKIELDQVKQQLTNETSRIRADNK) adopt a coiled-coil conformation. A helical membrane pass occupies residues 231 to 253 (TIRYLAASVFTCLAIALGFYRFW).

This sequence belongs to the CCDC90 family. As to quaternary structure, interacts with MCU.

It is found in the mitochondrion membrane. This Mus musculus (Mouse) protein is Coiled-coil domain-containing protein 90B, mitochondrial (Ccdc90b).